Here is a 416-residue protein sequence, read N- to C-terminus: E3 ubiquitin-protein ligase RNFT1 (416 aa).

Polar residues predominate over residues 27 to 45; that stretch reads QSSSGHTHHQPGSNDSPSV. 2 disordered regions span residues 27–50 and 63–116; these read QSSS…MSLP and GDVT…ADSR. Over residues 77 to 86 the composition is skewed to basic residues; sequence GARSSSRRVR. 6 helical membrane-spanning segments follow: residues 146–166, 184–204, 214–234, 237–257, 265–287, and 302–322; these read LVVQ…TFLY, LQCL…YYTF, VFMN…VVGI, FIGK…PSFV, YWYM…PVWF, and WHFG…IIFG. The required for ubiquitin ligase activity and for protection against ER stress-induced cell death stretch occupies residues 349-400; sequence CSEVDGMCAICQAEFIKPIVLVCQHVFCEECISLWFNKEKTCPLCRTVISNQ. Residues 356–394 form an RING-type zinc finger; it reads CAICQAEFIKPIVLVCQHVFCEECISLWFNKEKTCPLCR.

The protein localises to the endoplasmic reticulum membrane. It carries out the reaction S-ubiquitinyl-[E2 ubiquitin-conjugating enzyme]-L-cysteine + [acceptor protein]-L-lysine = [E2 ubiquitin-conjugating enzyme]-L-cysteine + N(6)-ubiquitinyl-[acceptor protein]-L-lysine.. Its pathway is protein modification; protein ubiquitination. Functionally, E3 ubiquitin-protein ligase that acts in the endoplasmic reticulum (ER)-associated degradation (ERAD) pathway, which targets misfolded proteins that accumulate in the endoplasmic reticulum (ER) for ubiquitination and subsequent proteasome-mediated degradation. Protects cells from ER stress-induced apoptosis. In Xenopus tropicalis (Western clawed frog), this protein is E3 ubiquitin-protein ligase RNFT1 (rnft1).